Consider the following 102-residue polypeptide: Large ribosomal subunit protein P1 (102 aa).

Residues 69-91 are disordered; it reads APAAAAEEKKEEEKKEEKKEEDT. Basic and acidic residues predominate over residues 74–90; that stretch reads AEEKKEEEKKEEKKEED.

The protein belongs to the eukaryotic ribosomal protein P1/P2 family. Part of the 50S ribosomal subunit. Homodimer, it forms part of the ribosomal stalk which helps the ribosome interact with GTP-bound translation factors. Forms a heptameric uL10/P0(P1)2(P1)2(P1)2 complex, where uL10/P0 forms an elongated spine to which the P1 dimers bind in a sequential fashion.

Forms part of the ribosomal stalk, playing a central role in the interaction of the ribosome with GTP-bound translation factors. The chain is Large ribosomal subunit protein P1 from Methanocaldococcus jannaschii (strain ATCC 43067 / DSM 2661 / JAL-1 / JCM 10045 / NBRC 100440) (Methanococcus jannaschii).